The primary structure comprises 500 residues: Aspartyl/glutamyl-tRNA(Asn/Gln) amidotransferase subunit B (500 aa).

It belongs to the GatB/GatE family. GatB subfamily. In terms of assembly, heterotrimer of A, B and C subunits.

It catalyses the reaction L-glutamyl-tRNA(Gln) + L-glutamine + ATP + H2O = L-glutaminyl-tRNA(Gln) + L-glutamate + ADP + phosphate + H(+). The catalysed reaction is L-aspartyl-tRNA(Asn) + L-glutamine + ATP + H2O = L-asparaginyl-tRNA(Asn) + L-glutamate + ADP + phosphate + 2 H(+). Functionally, allows the formation of correctly charged Asn-tRNA(Asn) or Gln-tRNA(Gln) through the transamidation of misacylated Asp-tRNA(Asn) or Glu-tRNA(Gln) in organisms which lack either or both of asparaginyl-tRNA or glutaminyl-tRNA synthetases. The reaction takes place in the presence of glutamine and ATP through an activated phospho-Asp-tRNA(Asn) or phospho-Glu-tRNA(Gln). This Sinorhizobium fredii (strain NBRC 101917 / NGR234) protein is Aspartyl/glutamyl-tRNA(Asn/Gln) amidotransferase subunit B.